The following is a 224-amino-acid chain: Charged multivesicular body protein 4b (224 aa).

A disordered region spans residues 1–23 (MSVFGKLFGAGGGKAGKGGPTPQ). N-acetylserine is present on Ser-2. Residues 2 to 153 (SVFGKLFGAG…EISTAISKPV (152 aa)) are intramolecular interaction with C-terminus. N6-acetyllysine is present on Lys-6. The segment covering 8-19 (FGAGGGKAGKGG) has biased composition (gly residues). The stretch at 23 to 183 (QEAIQRLRDT…EELDKNLLEI (161 aa)) forms a coiled coil. The residue at position 114 (Lys-114) is an N6-acetyllysine. The segment at 154-224 (GFGEEFDEDE…KELENWAGSM (71 aa)) is intramolecular interaction with N-terminus. 2 positions are modified to phosphoserine: Ser-184 and Ser-223. The tract at residues 185 to 224 (GPETVPLPNVPSVALPSKPAKKKEEEDDDMKELENWAGSM) is disordered.

The protein belongs to the SNF7 family. Probable core component of the endosomal sorting required for transport complex III (ESCRT-III). ESCRT-III components are thought to multimerize to form a flat lattice on the perimeter membrane of the endosome. Several assembly forms of ESCRT-III may exist that interact and act sequentially. Interacts with CHMP6 and CHMP4C. Interacts with PDCD6IP; the interaction is direct. Interacts with VPS4A; the interaction is direct. Interacts with VPS4B; the interaction is direct. Interacts with CHMP7. Interacts with CFTR; the interaction requires misfolded CFTR. Interacts with PTPN23. Interacts with CC2D1B. ISGylated. Isgylation weakens its interaction with VPS4A.

The protein resides in the cytoplasm. It is found in the cytosol. It localises to the late endosome membrane. Its subcellular location is the midbody. The protein localises to the nucleus envelope. Functionally, probable core component of the endosomal sorting required for transport complex III (ESCRT-III) which is involved in multivesicular bodies (MVBs) formation and sorting of endosomal cargo proteins into MVBs. MVBs contain intraluminal vesicles (ILVs) that are generated by invagination and scission from the limiting membrane of the endosome and mostly are delivered to lysosomes enabling degradation of membrane proteins, such as stimulated growth factor receptors, lysosomal enzymes and lipids. The MVB pathway appears to require the sequential function of ESCRT-O, -I,-II and -III complexes. ESCRT-III proteins mostly dissociate from the invaginating membrane before the ILV is released. The ESCRT machinery also functions in topologically equivalent membrane fission events, such as the terminal stages of cytokinesis. Together with SPAST, the ESCRT-III complex promotes nuclear envelope sealing and mitotic spindle disassembly during late anaphase. Plays a role in the endosomal sorting pathway. ESCRT-III proteins are believed to mediate the necessary vesicle extrusion and/or membrane fission activities, possibly in conjunction with the AAA ATPase VPS4. When overexpressed, membrane-assembled circular arrays of CHMP4B filaments can promote or stabilize negative curvature and outward budding. CHMP4A/B/C are required for the exosomal release of SDCBP, CD63 and syndecan. Majority of the protein exists in a folded closed conformation. This is Charged multivesicular body protein 4b (Chmp4b) from Mus musculus (Mouse).